The following is a 359-amino-acid chain: Guanine nucleotide-binding protein G(q) subunit alpha (359 aa).

2 S-palmitoyl cysteine lipidation sites follow: C9 and C10. In terms of domain architecture, G-alpha spans 38–359 (RELKLLLLGT…QLNLKEYNLV (322 aa)). The G1 motif stretch occupies residues 41 to 54 (KLLLLGTGESGKST). S50, G51, K52, S53, T54, S156, L180, R181, and R183 together coordinate GTP. S53 serves as a coordination point for Mg(2+). The interval 178-186 (DVLRVRVPT) is G2 motif. Mg(2+) is bound at residue T186. The tract at residues 201 to 210 (FRMVDVGGQR) is G3 motif. A 5-glutamyl histamine modification is found at Q209. The interval 270 to 277 (ILFLNKKD) is G4 motif. N274, K275, D277, and A331 together coordinate GTP. The tract at residues 329-334 (TCATDT) is G5 motif.

The protein belongs to the G-alpha family. G(q) subfamily. G proteins are composed of 3 units; alpha, beta and gamma. The alpha chain contains the guanine nucleotide binding site. Interacts (GDP-bound form) with RIC8A (via C-terminus); promoting GNAQ folding and association with the plasma membrane. Binds NHERF1. Forms a complex with PECAM1 and BDKRB2. Interacts with GAS2L2. In terms of processing, palmitoylated by ZDHHC3 and ZDHHC7. Palmitoylation occurs in the Golgi and participates in the localization of GNAQ to the plasma membrane. Histaminylated at Gln-209 residues by TGM2.

The protein resides in the cell membrane. The protein localises to the golgi apparatus. It localises to the nucleus. It is found in the nucleus membrane. The enzyme catalyses GTP + H2O = GDP + phosphate + H(+). In terms of biological role, guanine nucleotide-binding proteins (G proteins) function as transducers downstream of G protein-coupled receptors (GPCRs) in numerous signaling cascades. The alpha chain contains the guanine nucleotide binding site and alternates between an active, GTP-bound state and an inactive, GDP-bound state. Signaling by an activated GPCR promotes GDP release and GTP binding. The alpha subunit has a low GTPase activity that converts bound GTP to GDP, thereby terminating the signal. Both GDP release and GTP hydrolysis are modulated by numerous regulatory proteins. Signaling is mediated via phospholipase C-beta-dependent inositol lipid hydrolysis for signal propagation: activates phospholipase C-beta: following GPCR activation, GNAQ activates PLC-beta (PLCB1, PLCB2, PLCB3 or PLCB4), leading to production of diacylglycerol (DAG) and inositol 1,4,5-trisphosphate (IP3). Required for platelet activation. Regulates B-cell selection and survival and is required to prevent B-cell-dependent autoimmunity. Regulates chemotaxis of BM-derived neutrophils and dendritic cells (in vitro). Transduces FFAR4 signaling in response to long-chain fatty acids (LCFAs). Together with GNA11, required for heart development. The chain is Guanine nucleotide-binding protein G(q) subunit alpha (GNAQ) from Canis lupus familiaris (Dog).